Reading from the N-terminus, the 408-residue chain is Putative glutamate--cysteine ligase 2 (408 aa).

Belongs to the glutamate--cysteine ligase type 2 family. YbdK subfamily.

It catalyses the reaction L-cysteine + L-glutamate + ATP = gamma-L-glutamyl-L-cysteine + ADP + phosphate + H(+). In terms of biological role, ATP-dependent carboxylate-amine ligase which exhibits weak glutamate--cysteine ligase activity. In Bradyrhizobium sp. (strain BTAi1 / ATCC BAA-1182), this protein is Putative glutamate--cysteine ligase 2.